Reading from the N-terminus, the 366-residue chain is tRNA(Met) cytidine acetate ligase (366 aa).

ATP contacts are provided by residues 7–20, Gly-96, Asn-152, and Arg-175; that span reads IAEFNPFHYGHQYL.

Belongs to the TmcAL family.

The protein resides in the cytoplasm. It carries out the reaction cytidine(34) in elongator tRNA(Met) + acetate + ATP = N(4)-acetylcytidine(34) in elongator tRNA(Met) + AMP + diphosphate. Catalyzes the formation of N(4)-acetylcytidine (ac(4)C) at the wobble position of elongator tRNA(Met), using acetate and ATP as substrates. First activates an acetate ion to form acetyladenylate (Ac-AMP) and then transfers the acetyl group to tRNA to form ac(4)C34. In Streptococcus equi subsp. zooepidemicus (strain MGCS10565), this protein is tRNA(Met) cytidine acetate ligase.